A 334-amino-acid polypeptide reads, in one-letter code: Phosphate acyltransferase (334 aa).

It belongs to the PlsX family. As to quaternary structure, homodimer. Probably interacts with PlsY.

The protein resides in the cytoplasm. It catalyses the reaction a fatty acyl-[ACP] + phosphate = an acyl phosphate + holo-[ACP]. It functions in the pathway lipid metabolism; phospholipid metabolism. Catalyzes the reversible formation of acyl-phosphate (acyl-PO(4)) from acyl-[acyl-carrier-protein] (acyl-ACP). This enzyme utilizes acyl-ACP as fatty acyl donor, but not acyl-CoA. The polypeptide is Phosphate acyltransferase (Streptococcus thermophilus (strain CNRZ 1066)).